We begin with the raw amino-acid sequence, 467 residues long: Pup--protein ligase (467 aa).

Residue Glu-12 coordinates Mg(2+). Position 56 (Arg-56) interacts with ATP. Tyr-58 is a Mg(2+) binding site. The active-site Proton acceptor is Asp-60. Glu-66 provides a ligand contact to Mg(2+). Residues Thr-69 and Trp-431 each contribute to the ATP site.

It belongs to the Pup ligase/Pup deamidase family. Pup-conjugating enzyme subfamily.

It catalyses the reaction ATP + [prokaryotic ubiquitin-like protein]-L-glutamate + [protein]-L-lysine = ADP + phosphate + N(6)-([prokaryotic ubiquitin-like protein]-gamma-L-glutamyl)-[protein]-L-lysine.. The protein operates within protein degradation; proteasomal Pup-dependent pathway. It participates in protein modification; protein pupylation. Catalyzes the covalent attachment of the prokaryotic ubiquitin-like protein modifier Pup to the proteasomal substrate proteins, thereby targeting them for proteasomal degradation. This tagging system is termed pupylation. The ligation reaction involves the side-chain carboxylate of the C-terminal glutamate of Pup and the side-chain amino group of a substrate lysine. This chain is Pup--protein ligase, found in Corynebacterium jeikeium (strain K411).